Reading from the N-terminus, the 227-residue chain is tRNA (guanine-N(1)-)-methyltransferase (227 aa).

S-adenosyl-L-methionine-binding positions include Gly-107 and 127–132 (LGDFIL).

The protein belongs to the RNA methyltransferase TrmD family. Homodimer.

It is found in the cytoplasm. It catalyses the reaction guanosine(37) in tRNA + S-adenosyl-L-methionine = N(1)-methylguanosine(37) in tRNA + S-adenosyl-L-homocysteine + H(+). Its function is as follows. Specifically methylates guanosine-37 in various tRNAs. This is tRNA (guanine-N(1)-)-methyltransferase from Mesomycoplasma hyopneumoniae (strain 232) (Mycoplasma hyopneumoniae).